A 338-amino-acid chain; its full sequence is Ferrochelatase (338 aa).

Fe cation contacts are provided by His-189 and Glu-294.

Belongs to the ferrochelatase family.

It is found in the cytoplasm. The catalysed reaction is heme b + 2 H(+) = protoporphyrin IX + Fe(2+). The protein operates within porphyrin-containing compound metabolism; protoheme biosynthesis; protoheme from protoporphyrin-IX: step 1/1. Functionally, catalyzes the ferrous insertion into protoporphyrin IX. The protein is Ferrochelatase of Pseudomonas putida (strain ATCC 47054 / DSM 6125 / CFBP 8728 / NCIMB 11950 / KT2440).